Here is a 366-residue protein sequence, read N- to C-terminus: MTAPLELEQIRKAPKALLHDHLDGGLRPSTVLDIAGQTGYDGLPATDVEELATWFRTRSHSGSLERYLEPFSHTVAVMQTPEALHRVAYECVEDLAEDSVVYAEIRFAPELHINRGMSFDEIVDAVLAGFADGEKACAAAGRPIVVRLLVTAMRHAAVSREIAELAIRWRDKGVVGFDIAGAEAGNPPTRHLEAFDYMRDHNARFTIHAGEAFGLPSIHEAIAFCGADRLGHGVRIVDDIDVLADGPDKGKVRLGRLANILRDKRIPLELCPSSNVQTGAVKSIADHPFDLLARTRFRVTVNTDNRLMSDTYMSREMHRLVQAFGYGWSDLERFTINAMKSAFIPFDERLAIIDEVIKPRYAVLIG.

Residues H19 and H21 each coordinate Zn(2+). Substrate contacts are provided by H21, D23, and G181. H208 provides a ligand contact to Zn(2+). Residue E211 is the Proton donor of the active site. Zn(2+) is bound at residue D304.

Belongs to the metallo-dependent hydrolases superfamily. Adenosine and AMP deaminases family. Adenosine deaminase subfamily. Zn(2+) is required as a cofactor.

It carries out the reaction adenosine + H2O + H(+) = inosine + NH4(+). It catalyses the reaction 2'-deoxyadenosine + H2O + H(+) = 2'-deoxyinosine + NH4(+). Catalyzes the hydrolytic deamination of adenosine and 2-deoxyadenosine. The sequence is that of Adenosine deaminase from Mycobacterium avium (strain 104).